Consider the following 182-residue polypeptide: Protein LIGHT-DEPENDENT SHORT HYPOCOTYLS 5 (182 aa).

The segment covering 1-16 has biased composition (low complexity); that stretch reads MEGETAAKAAASSSSS. Disordered regions lie at residues 1–22 and 138–168; these read MEGE…RYES and ARGI…DAEG. The 129-residue stretch at 19–147 folds into the ALOG domain; it reads RYESQKRRDW…ARGIPYDKKK (129 aa). The short motif at 145-149 is the Nuclear localization signal element; the sequence is KKKRK.

This sequence belongs to the plant homeotic and developmental regulators ALOG protein family.

The protein localises to the nucleus. Probable transcription regulator that acts as a developmental regulator by promoting cell growth in response to light. This chain is Protein LIGHT-DEPENDENT SHORT HYPOCOTYLS 5 (LSH5), found in Arabidopsis thaliana (Mouse-ear cress).